Consider the following 233-residue polypeptide: Small ribosomal subunit protein uS2 (233 aa).

It belongs to the universal ribosomal protein uS2 family.

This chain is Small ribosomal subunit protein uS2, found in Clostridium botulinum (strain Hall / ATCC 3502 / NCTC 13319 / Type A).